The sequence spans 385 residues: Succinate--CoA ligase [ADP-forming] subunit beta (385 aa).

One can recognise an ATP-grasp domain in the interval 9 to 244 (KEILRKYGVP…QDEEDPLETR (236 aa)). ATP is bound by residues lysine 46, 53 to 55 (GRG), glutamate 99, cysteine 102, and glutamate 107. Asparagine 199 and aspartate 213 together coordinate Mg(2+). Substrate contacts are provided by residues asparagine 264 and 321-323 (GIM).

This sequence belongs to the succinate/malate CoA ligase beta subunit family. As to quaternary structure, heterotetramer of two alpha and two beta subunits. It depends on Mg(2+) as a cofactor.

It carries out the reaction succinate + ATP + CoA = succinyl-CoA + ADP + phosphate. The catalysed reaction is GTP + succinate + CoA = succinyl-CoA + GDP + phosphate. Its pathway is carbohydrate metabolism; tricarboxylic acid cycle; succinate from succinyl-CoA (ligase route): step 1/1. Succinyl-CoA synthetase functions in the citric acid cycle (TCA), coupling the hydrolysis of succinyl-CoA to the synthesis of either ATP or GTP and thus represents the only step of substrate-level phosphorylation in the TCA. The beta subunit provides nucleotide specificity of the enzyme and binds the substrate succinate, while the binding sites for coenzyme A and phosphate are found in the alpha subunit. This Rickettsia bellii (strain RML369-C) protein is Succinate--CoA ligase [ADP-forming] subunit beta.